The primary structure comprises 504 residues: Maturase K (504 aa).

Belongs to the intron maturase 2 family. MatK subfamily.

The protein resides in the plastid. It localises to the chloroplast. Functionally, usually encoded in the trnK tRNA gene intron. Probably assists in splicing its own and other chloroplast group II introns. The polypeptide is Maturase K (Nepenthes gracilis (Slender pitcher plant)).